The sequence spans 83 residues: Small integral membrane protein 10 (83 aa).

The helical transmembrane segment at 64-82 threads the bilayer; the sequence is FFYFYILASVILNVHLQVY.

It localises to the membrane. In Homo sapiens (Human), this protein is Small integral membrane protein 10 (SMIM10).